Here is a 65-residue protein sequence, read N- to C-terminus: Large ribosomal subunit protein bL28 (65 aa).

The protein belongs to the bacterial ribosomal protein bL28 family.

The chain is Large ribosomal subunit protein bL28 from Lachnoclostridium phytofermentans (strain ATCC 700394 / DSM 18823 / ISDg) (Clostridium phytofermentans).